The sequence spans 83 residues: BmKBT-like peptide (83 aa).

The N-terminal stretch at 1 to 19 (MKAALLLVISTLMLIGVLT) is a signal peptide. An LCN-type CS-alpha/beta domain is found at 21–81 (KSGYPIQHDG…TWSRETNKCR (61 aa)). Cystine bridges form between Cys31–Cys80, Cys35–Cys54, Cys41–Cys61, and Cys45–Cys63. Residue Lys83 is a propeptide, removed by a carboxypeptidase.

The protein belongs to the long (4 C-C) scorpion toxin superfamily. Sodium channel inhibitor family. Beta subfamily. As to expression, expressed by the venom gland.

It is found in the secreted. Its function is as follows. Sodium channel inhibitor. Possesses potent toxicity in mice but induces only paralysis in cotton bollworm. This Olivierus martensii (Manchurian scorpion) protein is BmKBT-like peptide.